Consider the following 376-residue polypeptide: Chaperone protein DnaJ (376 aa).

The J domain maps to 5–69; it reads DYYEVLGVSK…QKRAQYDQYG (65 aa). The CR-type zinc-finger motif lies at 133-215; sequence GKDAEIEIPR…CHGKGRVTKT (83 aa). Residues cysteine 146, cysteine 149, cysteine 163, cysteine 166, cysteine 189, cysteine 192, cysteine 203, and cysteine 206 each contribute to the Zn(2+) site. CXXCXGXG motif repeat units follow at residues 146–153, 163–170, 189–196, and 203–210; these read CDTCHGSG, CSHCGGKG, CQYCNGTG, and CPTCHGKG.

Belongs to the DnaJ family. Homodimer. Requires Zn(2+) as cofactor.

It localises to the cytoplasm. Functionally, participates actively in the response to hyperosmotic and heat shock by preventing the aggregation of stress-denatured proteins and by disaggregating proteins, also in an autonomous, DnaK-independent fashion. Unfolded proteins bind initially to DnaJ; upon interaction with the DnaJ-bound protein, DnaK hydrolyzes its bound ATP, resulting in the formation of a stable complex. GrpE releases ADP from DnaK; ATP binding to DnaK triggers the release of the substrate protein, thus completing the reaction cycle. Several rounds of ATP-dependent interactions between DnaJ, DnaK and GrpE are required for fully efficient folding. Also involved, together with DnaK and GrpE, in the DNA replication of plasmids through activation of initiation proteins. The protein is Chaperone protein DnaJ of Listeria monocytogenes serotype 4b (strain CLIP80459).